The following is a 152-amino-acid chain: Large ribosomal subunit protein eL14 (152 aa).

Belongs to the eukaryotic ribosomal protein eL14 family.

The sequence is that of Large ribosomal subunit protein eL14 (RPL14) from Lumbricus rubellus (Humus earthworm).